Here is a 524-residue protein sequence, read N- to C-terminus: Cytochrome c nitrite reductase subunit NrfA (524 aa).

The signal sequence occupies residues 1–24 (MNNQKTFKGLRLAALGLVAVAAFT). The tract at residues 29–39 (DVSTELKTPVY) is interaction with NrfH. Positions 78, 117, and 118 each coordinate Ca(2+). Residues His-121, Cys-147, Cys-150, Lys-151, Cys-187, Cys-190, and His-191 each contribute to the heme site. An interaction with NrfH region spans residues 221 to 222 (RN). Heme-binding residues include Cys-229, Cys-232, and His-233. Residues Glu-235, Tyr-236, Lys-295, and Gln-297 each contribute to the Ca(2+) site. Residues His-309, Cys-316, Cys-319, His-320, His-335, Cys-349, Cys-352, His-353, and His-434 each coordinate heme. Residues 318–331 (DCHMSYTRSDDKKK) form an interaction with NrfH region. The interval 351–355 (QCHSD) is interaction with NrfH.

Belongs to the cytochrome c-552 family. In terms of assembly, component of the NrfHA cytochrome c nitrite reductase complex composed of 4 NrfA catalytic subunits and 2 NrfH quinone-binding subunits. NrfA homodimer interacts with NrfH. Ca(2+) serves as cofactor. It depends on heme as a cofactor.

The protein resides in the cell inner membrane. It catalyses the reaction 6 Fe(III)-[cytochrome c] + NH4(+) + 2 H2O = 6 Fe(II)-[cytochrome c] + nitrite + 8 H(+). Catalytic subunit of the cytochrome c nitrite reductase holocomplex NrfHA. Has both nitrite and sulfite reductase activities. Catalyzes the reduction of nitrite to ammonia, consuming six electrons acquired by the electron donor subunit NrfH from the menaquinone pool, in an anaerobic respiratory process of nitrite. The other biological function of the NrfHA holocomplex is to detoxify nitrite. This function is essential for the survival of this organism as it enables it to overcome inhibition by nitrite, which is produced by other organisms living in the same environment. In Nitratidesulfovibrio vulgaris (strain ATCC 29579 / DSM 644 / CCUG 34227 / NCIMB 8303 / VKM B-1760 / Hildenborough) (Desulfovibrio vulgaris), this protein is Cytochrome c nitrite reductase subunit NrfA.